Here is a 57-residue protein sequence, read N- to C-terminus: Large ribosomal subunit protein bL32 (57 aa).

Basic residues predominate over residues 1 to 19 (MAVPKRRMSRANTRSRRAQ). Positions 1 to 20 (MAVPKRRMSRANTRSRRAQW) are disordered.

This sequence belongs to the bacterial ribosomal protein bL32 family.

This Mycolicibacterium smegmatis (strain ATCC 700084 / mc(2)155) (Mycobacterium smegmatis) protein is Large ribosomal subunit protein bL32.